The sequence spans 339 residues: Methionyl-tRNA formyltransferase (339 aa).

Residue 110-113 participates in (6S)-5,6,7,8-tetrahydrofolate binding; that stretch reads SLLP.

The protein belongs to the Fmt family.

It catalyses the reaction L-methionyl-tRNA(fMet) + (6R)-10-formyltetrahydrofolate = N-formyl-L-methionyl-tRNA(fMet) + (6S)-5,6,7,8-tetrahydrofolate + H(+). In terms of biological role, attaches a formyl group to the free amino group of methionyl-tRNA(fMet). The formyl group appears to play a dual role in the initiator identity of N-formylmethionyl-tRNA by promoting its recognition by IF2 and preventing the misappropriation of this tRNA by the elongation apparatus. This is Methionyl-tRNA formyltransferase from Prochlorococcus marinus (strain SARG / CCMP1375 / SS120).